The following is a 175-amino-acid chain: ATP synthase subunit delta (175 aa).

Belongs to the ATPase delta chain family. In terms of assembly, F-type ATPases have 2 components, F(1) - the catalytic core - and F(0) - the membrane proton channel. F(1) has five subunits: alpha(3), beta(3), gamma(1), delta(1), epsilon(1). F(0) has three main subunits: a(1), b(2) and c(10-14). The alpha and beta chains form an alternating ring which encloses part of the gamma chain. F(1) is attached to F(0) by a central stalk formed by the gamma and epsilon chains, while a peripheral stalk is formed by the delta and b chains.

It is found in the cell membrane. Its function is as follows. F(1)F(0) ATP synthase produces ATP from ADP in the presence of a proton or sodium gradient. F-type ATPases consist of two structural domains, F(1) containing the extramembraneous catalytic core and F(0) containing the membrane proton channel, linked together by a central stalk and a peripheral stalk. During catalysis, ATP synthesis in the catalytic domain of F(1) is coupled via a rotary mechanism of the central stalk subunits to proton translocation. Functionally, this protein is part of the stalk that links CF(0) to CF(1). It either transmits conformational changes from CF(0) to CF(1) or is implicated in proton conduction. The chain is ATP synthase subunit delta from Lactococcus lactis subsp. lactis (strain IL1403) (Streptococcus lactis).